Reading from the N-terminus, the 175-residue chain is ADP-ribosylation factor 6 (175 aa).

G2 is lipidated: N-myristoyl glycine. Residues 20–27 (GLDAAGKT), 63–67 (DVGGQ), and 122–125 (NKQD) each bind GTP.

The protein belongs to the small GTPase superfamily. Arf family. Expressed in the head (at protein level).

It localises to the golgi apparatus. With respect to regulation, activation is generally mediated by a guanine exchange factor (GEF), while inactivation through hydrolysis of bound GTP is catalyzed by a GTPase activating protein (GAP). May be activated by Efa6. GTP-binding protein involved in protein trafficking; may modulate vesicle budding and uncoating within the Golgi apparatus. Promotes cell movement and remodeling of the actin cytoskeleton during compound eye morphogenesis. Required for normal ethanol-induced tolerance and preference. Probably after Efa6-mediated activation, counteracts ethanol-induced sedation. This Drosophila melanogaster (Fruit fly) protein is ADP-ribosylation factor 6.